The chain runs to 70 residues: Conotoxin ArMKLT2-0111 (70 aa).

An N-terminal signal peptide occupies residues 1 to 22 (MKLTCVLIIAVLFLTACQLTTG). The propeptide occupies 23 to 40 (EQKDHALRSTDKNSKLTR). Position 41 is a pyrrolidone carboxylic acid (Gln41). Disulfide bonds link Cys42/Cys56, Cys49/Cys60, and Cys55/Cys67.

Belongs to the conotoxin O1 superfamily. In terms of tissue distribution, expressed by the venom duct.

It localises to the secreted. This is Conotoxin ArMKLT2-0111 from Conus arenatus (Sand-dusted cone).